The chain runs to 160 residues: Cytochrome b6-f complex subunit 4 (160 aa).

Transmembrane regions (helical) follow at residues 36-56 (IFYMFPVVIFGTFAGVIGLAV), 96-116 (LGVLLMAAVPAGLITVPFIKI), and 131-151 (TVFLVGTVAAIWLGIGAALPI).

The protein belongs to the cytochrome b family. PetD subfamily. In terms of assembly, the 4 large subunits of the cytochrome b6-f complex are cytochrome b6, subunit IV (17 kDa polypeptide, petD), cytochrome f and the Rieske protein, while the 4 small subunits are petG, petL, petM and petN. The complex functions as a dimer.

It is found in the plastid. The protein localises to the chloroplast thylakoid membrane. In terms of biological role, component of the cytochrome b6-f complex, which mediates electron transfer between photosystem II (PSII) and photosystem I (PSI), cyclic electron flow around PSI, and state transitions. This is Cytochrome b6-f complex subunit 4 from Auxenochlorella protothecoides (Green microalga).